The sequence spans 570 residues: Set1/Ash2 histone methyltransferase complex subunit ash-2 (570 aa).

The PHD-type zinc finger occupies 19–76 (TTVCYCDGKRELGSVEVVCSTCLKWFHGRCLKEFHELNSNGVPFMICYTFTCKQCRPT). Residues 201–242 (NREPRHIELPPIEGPKTRGASKRRHAEAPVTGKKQKLAADYS) form a disordered region. Positions 270–468 (PNVPEDPAWN…TLVEMPGSYI (199 aa)) constitute a B30.2/SPRY domain.

Component of the SET2 complex (also known as the SET1/COMPASS complex), which contains at least set-2, swd-2.1, cfp-1, rbbp-5, wdr-5.1, dpy-30 and ash-2. Within the complex, interacts with cfp-1 and wdr-5.1. Expressed in somatic and germline tissues (at protein level).

It localises to the nucleus. Its function is as follows. Component of the set-2/ash-2 histone methyltransferase (HMT) complex. Required for the di- and trimethylation at 'Lys-4' of histone H3, a mark associated with epigenetic transcriptional activation. Implicated in the epigenetic inheritance of lifespan over several generations. Functions as a transcriptional regulator. Acts in the germline to limit the longevity of the soma, probably by regulating a lipid metabolism pathway that signals from the germline to the intestine, thereby preventing accumulation of mono-unsaturated fatty acids. This chain is Set1/Ash2 histone methyltransferase complex subunit ash-2, found in Caenorhabditis elegans.